Reading from the N-terminus, the 141-residue chain is Hemoglobin subunit alpha-A (141 aa).

In terms of domain architecture, Globin spans 1–141 (MLSASDKANV…VGLVLTAKYR (141 aa)). H58 provides a ligand contact to O2. H87 is a binding site for heme b.

It belongs to the globin family. As to quaternary structure, there are three forms of hemoglobin in Sphenodon: A, A' and D. Hb A is a tetramer of two alpha-A and two beta-1, Hb A' is a tetramer of two alpha-a and two beta-2, Hb D is a tetramer of two alpha-D and two beta-2. Red blood cells.

Functionally, involved in oxygen transport from the lung to the various peripheral tissues. The protein is Hemoglobin subunit alpha-A (HBAA) of Sphenodon punctatus (Tuatara).